The sequence spans 396 residues: Actin-related protein 6 (396 aa).

An N-acetylthreonine modification is found at threonine 2. At lysine 260 the chain carries N6-acetyllysine.

It belongs to the actin family. ARP6 subfamily. In terms of assembly, component of the chromatin-remodeling SRCAP complex composed of at least SRCAP, DMAP1, RUVBL1, RUVBL2, ACTL6A, YEATS4, ACTR6 and ZNHIT1. Interacts with CBX1, CBX3 and CBX5.

It localises to the cytoplasm. Its subcellular location is the cytoskeleton. The protein resides in the nucleus. It is found in the nucleolus. Required for formation and/or maintenance of proper nucleolar structure and function. Plays a dual role in the regulation of ribosomal DNA (rDNA) transcription. In the presence of high glucose, maintains active rDNA transcription through H2A.Z deposition and under glucose starvation, is required for the repression of rDNA transcription, and this function may be independent of H2A.Z. In Mus musculus (Mouse), this protein is Actin-related protein 6 (Actr6).